A 178-amino-acid polypeptide reads, in one-letter code: dCTP deaminase (178 aa).

DCTP-binding positions include 99 to 104 and aspartate 115; that span reads RSTWAR. The active-site Proton donor/acceptor is glutamate 125. The dCTP site is built by tyrosine 157 and glutamine 164.

Belongs to the dCTP deaminase family. As to quaternary structure, homotrimer.

It catalyses the reaction dCTP + H2O + H(+) = dUTP + NH4(+). Its pathway is pyrimidine metabolism; dUMP biosynthesis; dUMP from dCTP (dUTP route): step 1/2. Its function is as follows. Catalyzes the deamination of dCTP to dUTP. This Aeropyrum pernix (strain ATCC 700893 / DSM 11879 / JCM 9820 / NBRC 100138 / K1) protein is dCTP deaminase.